The following is an 868-amino-acid chain: Paladin (868 aa).

G2 carries the N-myristoyl glycine lipid modification.

This sequence belongs to the paladin family.

The protein localises to the cytoplasm. The protein resides in the cytosol. The chain is Paladin (PALD1) from Gallus gallus (Chicken).